The following is a 210-amino-acid chain: Transposable element activator uncharacterized 23 kDa protein (210 aa).

Positions 67–78 (SGRMGGPRRDGR) are enriched in basic and acidic residues. A disordered region spans residues 67–87 (SGRMGGPRRDGRVASSGVEGG).

This Zea mays (Maize) protein is Transposable element activator uncharacterized 23 kDa protein.